The chain runs to 249 residues: MESTPPRFGLDCRNRNKKDVNIRKQKEILKVDKLKKLEIKKLEDQKKLKEQEEKHRLTLIRLANAPPQTNSINNNNNNNNNIKTNRPPLIYGEDKDKKSLFPEPQDYDVDEPTYETSFCVKLGPNGVFQHELRFTNANARENSDIQKAIELSLKQTDVVIVKNPNDDIENDFVVFNEQPDEREKELEHWELMDECSSSLVNFVTTPYNFSEIEFPRLASTCSTQMLKKNLNQNNPWLNSKSLIANISQK.

The stretch at 30–65 (KVDKLKKLEIKKLEDQKKLKEQEEKHRLTLIRLANA) forms a coiled coil. The tract at residues 66–97 (PPQTNSINNNNNNNNNIKTNRPPLIYGEDKDK) is disordered.

This is an uncharacterized protein from Dictyostelium discoideum (Social amoeba).